We begin with the raw amino-acid sequence, 654 residues long: Glutamyl-tRNA(Gln) amidotransferase subunit B, mitochondrial (654 aa).

Residues 1–8 (MGRIPTRE) constitute a mitochondrion transit peptide. The segment at 79 to 101 (DQAKASKAQAKGKKKRSSADNQT) is disordered.

This sequence belongs to the GatB/GatE family. GatB subfamily. In terms of assembly, subunit of the heterotrimeric GatCAB amidotransferase (AdT) complex, composed of A, B and C subunits.

It is found in the mitochondrion. The enzyme catalyses L-glutamyl-tRNA(Gln) + L-glutamine + ATP + H2O = L-glutaminyl-tRNA(Gln) + L-glutamate + ADP + phosphate + H(+). Functionally, allows the formation of correctly charged Gln-tRNA(Gln) through the transamidation of misacylated Glu-tRNA(Gln) in the mitochondria. The reaction takes place in the presence of glutamine and ATP through an activated gamma-phospho-Glu-tRNA(Gln). The polypeptide is Glutamyl-tRNA(Gln) amidotransferase subunit B, mitochondrial (Pyricularia oryzae (strain 70-15 / ATCC MYA-4617 / FGSC 8958) (Rice blast fungus)).